The sequence spans 357 residues: O-methyltransferase 1, chloroplastic (357 aa).

A chloroplast-targeting transit peptide spans 1–53 (MPVLPWLAAAATTPVRRSPPLPATPRALLRLPASSFPPWSNCAKSGLPPRGPF). The interval 50–71 (RGPFATAADTPLGGSLPEPEEE) is disordered.

Belongs to the methyltransferase superfamily. LCMT family. In terms of tissue distribution, expressed in roots, leaf sheaths, flag leaves and panicles.

Its subcellular location is the plastid. It is found in the chloroplast. It carries out the reaction N-acetylserotonin + S-adenosyl-L-methionine = melatonin + S-adenosyl-L-homocysteine + H(+). It participates in aromatic compound metabolism; melatonin biosynthesis; melatonin from serotonin: step 1/2. In terms of biological role, involved in melatonin biosynthesis. Can function as acetylserotonin O-methyltransferase. Catalyzes the transfer of a methyl group onto N-acetylserotonin, producing melatonin (N-acetyl-5-methoxytryptamine). Involved in the regulation of jasmonate- and brassinosteroid-mediated plant growth and defense responses. The polypeptide is O-methyltransferase 1, chloroplastic (Oryza sativa subsp. japonica (Rice)).